A 69-amino-acid polypeptide reads, in one-letter code: DNA-directed RNA polymerase subunit epsilon (69 aa).

This sequence belongs to the RNA polymerase subunit epsilon family. In terms of assembly, monomer. RNAP is composed of a core of 2 alpha, a beta and a beta' subunit. The core is associated with a delta subunit, and at least one of epsilon or omega. When a sigma factor is associated with the core the holoenzyme is formed, which can initiate transcription.

Its subcellular location is the cytoplasm. The protein resides in the nucleoid. It carries out the reaction RNA(n) + a ribonucleoside 5'-triphosphate = RNA(n+1) + diphosphate. A non-essential component of RNA polymerase (RNAP). Has a similar structure to bacteriophage T7 protein Gp2 (AC P03704), which is known to bind to RNAP in the DNA binding-cleft. Unlike Gp2 however, this protein does not inhibit transcription initiation. In vitro reconstitution experiments show this subunit is dispensible. The sequence is that of DNA-directed RNA polymerase subunit epsilon from Bacillus subtilis (strain 168).